The sequence spans 57 residues: Mambaquaretin-3 (57 aa).

The 51-residue stretch at 5-55 (CNLPVKPGPCNGFFSAFYYSQKKNKCHSFTYGGCKGNANRFSTIEECRRTC) folds into the BPTI/Kunitz inhibitor domain. 3 cysteine pairs are disulfide-bonded: Cys-5–Cys-55, Cys-14–Cys-38, and Cys-30–Cys-51.

The protein belongs to the venom Kunitz-type family. Expressed by the venom gland.

It localises to the secreted. Functionally, interacts with vasopressin V2 receptor (V2R/AVPR2), probably in a selective manner. Inhibits vasopressin binding human V2R in the nanomolar range (Ki=13.3 nM), and also moderately inhibits vasopressin-induced cAMP production (IC(50)=453 nM). In vivo, intraperitoneal injection of this protein into rats increases diuresis by 4.5-fold, without any loss of electrolytes. This is Mambaquaretin-3 from Dendroaspis polylepis polylepis (Black mamba).